A 190-amino-acid chain; its full sequence is uncharacterized protein (190 aa).

Topologically, residues 1-16 are cytoplasmic; it reads MAILPEFISQTPPVTR. Residues 17 to 37 traverse the membrane as a helical segment; sequence YIVLGTLFTTLAVNFGYVSDL. At 38-55 the chain is on the lumenal side; that stretch reads KIFFNWKLFLAKGEYWRA. Residues 56–76 traverse the membrane as a helical segment; it reads ITTFLYVGPFGLELILYLSFL. Residues 77-98 lie on the Cytoplasmic side of the membrane; it reads LRFMSMLERSSPPPQTQSFLKT. Residues 99 to 119 form a helical membrane-spanning segment; it reads VLIVWFSLLVTSYFSYMPFAA. The Lumenal portion of the chain corresponds to 120-138; the sequence is SYFSFTMLYIWSWKHPLYR. Residues 139–159 traverse the membrane as a helical segment; sequence ISILGLFDVKAPYVPWVMVLL. Topologically, residues 160 to 163 are cytoplasmic; the sequence is RWLR. A helical membrane pass occupies residues 164-184; that stretch reads TGIFPLLDLISALIGHVYFFV. At 185–190 the chain is on the lumenal side; the sequence is TDFSTV.

It belongs to the derlin family.

It localises to the endoplasmic reticulum membrane. This is an uncharacterized protein from Schizosaccharomyces pombe (strain 972 / ATCC 24843) (Fission yeast).